Reading from the N-terminus, the 475-residue chain is Mucin-1 (475 aa).

Residues 1–23 (MTPGTQSLFFLLLLLTVLTVVTG) form the signal peptide. The segment at 23-252 (GSGHASSTPG…SPLTSSNHST (230 aa)) is disordered. Residues 24–380 (SGHASSTPGG…QSGAGVPGWG (357 aa)) are Extracellular-facing. The segment covering 38 to 48 (SATQRSSMPSS) has biased composition (polar residues). The span at 54–75 (VSMTSSVLSSHSPGSGSSTTQG) shows a compositional bias: low complexity. Repeat copies occupy residues 86–105 (PASG…PVTR), 106–125 (PAPG…PDTR), 126–145 (PALG…PDTR), 146–165 (PTLG…PDTR), and 166–185 (PTLG…SGSA). The tract at residues 86–185 (PASGSAATWG…HNVTSASGSA (100 aa)) is 5 X 20 AA approximate tandem repeats. Residues 90–102 (SAATWGQDVTSVP) are compositionally biased toward polar residues. O-linked (GalNAc...) threonine glycans are attached at residues Thr93 and Thr99. An O-linked (GalNAc...) serine glycan is attached at Ser100. Thr104 carries an O-linked (GalNAc...) threonine glycan. Over residues 109–122 (GSTTSPAQDVTSAP) the composition is skewed to polar residues. N-linked (GlcNAc...) asparagine glycosylation occurs at Asn177. Residues 180-190 (SASGSASGSAS) show a composition bias toward low complexity. 2 stretches are compositionally biased toward polar residues: residues 191–213 (TLVH…TPFS) and 233–252 (DASS…NHST). N-linked (GlcNAc...) asparagine glycans are attached at residues Asn195, Asn249, Asn275, and Asn353. An SEA domain is found at 259-368 (GVSFFFLSFH…VSVSDVPFPF (110 aa)). A helical membrane pass occupies residues 381–401 (IALLVLVCVLVALAIVYLIAL). Residues 402 to 475 (AVCQCRRKNY…PAVAATSANL (74 aa)) are Cytoplasmic-facing. 2 S-palmitoyl cysteine lipidation sites follow: Cys404 and Cys406. The segment at 412-448 (GQLDIFPARDAYHPMSEYPTYHTHGRYVPPSSTNRSP) is interaction with P53. Phosphotyrosine; by PDGFR is present on Tyr423. An Interaction with GRB2 motif is present at residues 423-426 (YHPM). Phosphotyrosine is present on Tyr432. The interval 435–460 (HGRYVPPSSTNRSPYEKVSEGNGGSS) is disordered. Residue Tyr438 is modified to Phosphotyrosine; by PDGFR. The segment at 443–450 (STNRSPYE) is required for interaction with GSK3B. Position 444 is a phosphothreonine; by PKC/PRKCD (Thr444). A Phosphoserine; by GSK3-beta modification is found at Ser447. Tyr449 is subject to Phosphotyrosine; by CSK, EGFR and SRC. The short motif at 449 to 452 (YEKV) is the Interaction with SRC and ESR1 element. The tract at residues 453 to 461 (SEGNGGSSL) is required for interaction with beta- and gamma-catenins. Tyr463 is modified (phosphotyrosine). The short motif at 463–466 (YTNP) is the Required for interaction with AP1S2 element.

The alpha subunit forms a tight, non-covalent heterodimeric complex with the proteolytically-released beta-subunit. Binds directly the SH2 domain of GRB2, and forms a MUC1/GRB2/SOS1 complex involved in RAS signaling. The cytoplasmic tail (MUC1CT) interacts with several proteins such as SRC, CTNNB1 and ERBs. Interaction with the SH2 domain of CSK decreases interaction with GSK3B. Interacts with CTNNB1/beta-catenin and JUP/gamma-catenin and promotes cell adhesion. Interaction with JUP/gamma-catenin is induced by heregulin. Binds PRKCD, ERBB2, ERBB3 and ERBB4. Heregulin (HRG) stimulates the interaction with ERBB2 and, to a much lesser extent, the interaction with ERBB3 and ERBB4. Interacts with P53 in response to DNA damage. Interacts with KLF4. Interacts with estrogen receptor alpha/ESR1, through its DNA-binding domain, and stimulates its transcription activity. Binds ADAM17. Post-translationally, probably both N- and O-glycosylated (in repeat region). Proteolytic cleavage in the SEA domain occurs in the endoplasmic reticulum by an autoproteolytic mechanism and requires the full-length SEA domain as well as requiring a Ser, Thr or Cys residue at the P + 1 site. Ectodomain shedding is mediated by ADAM17 in uterine epithelial cells. In terms of processing, dual palmitoylation on cysteine residues in the CQC motif is required for recycling from endosomes back to the plasma membrane. Post-translationally, phosphorylated on tyrosines and serine residues in the C-terminal. Phosphorylation on tyrosines in the C-terminal increases the nuclear location of MUC1 and beta-catenin. Phosphorylation by PKC delta induces binding of MUC1 to beta-catenin/CTNNB1 and thus decreases the formation of the beta-catenin/E-cadherin complex. Src-mediated phosphorylation inhibits interaction with GSK3B. Csk- or Src- or EGFR-mediated phosphorylation on Tyr-449 increases binding to beta-catenin/CTNNB1. GSK3B-mediated phosphorylation on Ser-447 decreases this interaction but restores the formation of the beta-cadherin/E-cadherin complex. On T-cell receptor activation, phosphorylated by LCK. PDGFR-mediated phosphorylation increases nuclear colocalization of MUC1CT and CTNNB1.

It is found in the apical cell membrane. Its subcellular location is the cell membrane. It localises to the cytoplasm. The protein localises to the nucleus. In terms of biological role, the alpha subunit has cell adhesive properties. Can act both as an adhesion and an anti-adhesion protein. May provide a protective layer on epithelial cells against bacterial and enzyme attack. Its function is as follows. The beta subunit contains a C-terminal domain which is involved in cell signaling, through phosphorylations and protein-protein interactions. Modulates signaling in ERK, Src and NF-kappaB pathways. In activated T-cells, influences directly or indirectly the Ras/MAPK pathway. Promotes tumor progression. Regulates P53-mediated transcription and determines cell fate in the genotoxic stress response. Binds, together with KLF4, the PE21 promoter element of P53 and represses P53 activity. In Hylobates lar (Lar gibbon), this protein is Mucin-1 (MUC1).